We begin with the raw amino-acid sequence, 340 residues long: Glyceraldehyde-3-phosphate dehydrogenase (340 aa).

NAD(+) contacts are provided by residues Arg12–Ile13, Asp40, Lys85, and Ser128. Residues Ser158–Thr160, Thr189, Arg204, Thr217–Gly218, and Arg240 contribute to the D-glyceraldehyde 3-phosphate site. Residue Cys159 is the Nucleophile of the active site. An Isoglutamyl lysine isopeptide (Lys-Gln) (interchain with Q-Cter in protein Pup) cross-link involves residue Lys257. Asn321 provides a ligand contact to NAD(+).

The protein belongs to the glyceraldehyde-3-phosphate dehydrogenase family. As to quaternary structure, homotetramer.

Its subcellular location is the cytoplasm. The enzyme catalyses D-glyceraldehyde 3-phosphate + phosphate + NAD(+) = (2R)-3-phospho-glyceroyl phosphate + NADH + H(+). Its pathway is carbohydrate degradation; glycolysis; pyruvate from D-glyceraldehyde 3-phosphate: step 1/5. In terms of biological role, catalyzes the oxidative phosphorylation of glyceraldehyde 3-phosphate (G3P) to 1,3-bisphosphoglycerate (BPG) using the cofactor NAD. The first reaction step involves the formation of a hemiacetal intermediate between G3P and a cysteine residue, and this hemiacetal intermediate is then oxidized to a thioester, with concomitant reduction of NAD to NADH. The reduced NADH is then exchanged with the second NAD, and the thioester is attacked by a nucleophilic inorganic phosphate to produce BPG. This Mycolicibacterium smegmatis (strain ATCC 700084 / mc(2)155) (Mycobacterium smegmatis) protein is Glyceraldehyde-3-phosphate dehydrogenase (gapA).